A 442-amino-acid polypeptide reads, in one-letter code: Putative mannan endo-1,6-alpha-mannosidase C1198.07c (442 aa).

A signal peptide spans 1–19 (MRYLSFFFEFFFLFSFAFA). Residues 20–421 (FDFDVTSDDS…TPATKSDKGW (402 aa)) lie on the Lumenal side of the membrane. 7 N-linked (GlcNAc...) asparagine glycosylation sites follow: N75, N124, N193, N229, N254, N257, and N356. Residues 422–442 (AGFLTFAFSFVFLLFSIWLYF) traverse the membrane as a helical segment.

This sequence belongs to the glycosyl hydrolase 76 family.

It is found in the endoplasmic reticulum membrane. It carries out the reaction Random hydrolysis of (1-&gt;6)-alpha-D-mannosidic linkages in unbranched (1-&gt;6)-mannans.. The protein is Putative mannan endo-1,6-alpha-mannosidase C1198.07c of Schizosaccharomyces pombe (strain 972 / ATCC 24843) (Fission yeast).